The following is a 152-amino-acid chain: SKP1-like protein 8 (152 aa).

An interaction with the F-box domain of F-box proteins region spans residues 94-152 (TNAANFLNNKSLLHLAGQTVADMIKGNTPKQMREFFNIENDLTPEEEAAIRRENKWAFE).

Belongs to the SKP1 family. As to quaternary structure, part of a SCF (SKP1-cullin-F-box) protein ligase complex. Restricted to siliques.

It is found in the nucleus. It functions in the pathway protein modification; protein ubiquitination. In terms of biological role, involved in ubiquitination and subsequent proteasomal degradation of target proteins. Together with CUL1, RBX1 and a F-box protein, it forms a SCF E3 ubiquitin ligase complex. The functional specificity of this complex depends on the type of F-box protein. In the SCF complex, it serves as an adapter that links the F-box protein to CUL1. The protein is SKP1-like protein 8 (ASK8) of Arabidopsis thaliana (Mouse-ear cress).